The sequence spans 291 residues: GTPase Era (291 aa).

Positions 2–167 (KSGFVSIIGR…LDEIVKYLDE (166 aa)) constitute an Era-type G domain. The segment at 10 to 17 (GRTNAGKS) is G1. 10–17 (GRTNAGKS) contributes to the GTP binding site. The G2 stretch occupies residues 36–40 (NATRR). Residues 57–60 (DTPG) are G3. Residues 57–61 (DTPGL) and 116–119 (NKVD) contribute to the GTP site. The G4 stretch occupies residues 116 to 119 (NKVD). Residues 146-148 (YSS) are G5. The KH type-2 domain occupies 186 to 274 (YRDFILESIY…LLKLFVTVKK (89 aa)).

Belongs to the TRAFAC class TrmE-Era-EngA-EngB-Septin-like GTPase superfamily. Era GTPase family. Monomer.

The protein localises to the cytoplasm. It localises to the cell inner membrane. Functionally, an essential GTPase that binds both GDP and GTP, with rapid nucleotide exchange. Plays a role in 16S rRNA processing and 30S ribosomal subunit biogenesis and possibly also in cell cycle regulation and energy metabolism. In Campylobacter jejuni subsp. jejuni serotype O:23/36 (strain 81-176), this protein is GTPase Era.